The following is a 152-amino-acid chain: Ribosome maturation factor RimP (152 aa).

This sequence belongs to the RimP family.

The protein localises to the cytoplasm. Functionally, required for maturation of 30S ribosomal subunits. The protein is Ribosome maturation factor RimP of Burkholderia cenocepacia (strain ATCC BAA-245 / DSM 16553 / LMG 16656 / NCTC 13227 / J2315 / CF5610) (Burkholderia cepacia (strain J2315)).